The primary structure comprises 110 residues: Large ribosomal subunit protein mL60 (110 aa).

Belongs to the mitochondrion-specific ribosomal protein mL60 family. As to quaternary structure, component of the mitochondrial large ribosomal subunit (mt-LSU). Mature N.crassa 74S mitochondrial ribosomes consist of a small (37S) and a large (54S) subunit. The 37S small subunit contains a 16S ribosomal RNA (16S mt-rRNA) and 32 different proteins. The 54S large subunit contains a 23S rRNA (23S mt-rRNA) and 42 different proteins.

It localises to the mitochondrion. In terms of biological role, component of the mitochondrial ribosome (mitoribosome), a dedicated translation machinery responsible for the synthesis of mitochondrial genome-encoded proteins, including at least some of the essential transmembrane subunits of the mitochondrial respiratory chain. The mitoribosomes are attached to the mitochondrial inner membrane and translation products are cotranslationally integrated into the membrane. The protein is Large ribosomal subunit protein mL60 (mrpl31) of Neurospora crassa (strain ATCC 24698 / 74-OR23-1A / CBS 708.71 / DSM 1257 / FGSC 987).